Consider the following 266-residue polypeptide: 3-deoxy-manno-octulosonate cytidylyltransferase 1 (266 aa).

Belongs to the KdsB family.

It localises to the cytoplasm. The enzyme catalyses 3-deoxy-alpha-D-manno-oct-2-ulosonate + CTP = CMP-3-deoxy-beta-D-manno-octulosonate + diphosphate. It functions in the pathway nucleotide-sugar biosynthesis; CMP-3-deoxy-D-manno-octulosonate biosynthesis; CMP-3-deoxy-D-manno-octulosonate from 3-deoxy-D-manno-octulosonate and CTP: step 1/1. The protein operates within bacterial outer membrane biogenesis; lipopolysaccharide biosynthesis. Activates KDO (a required 8-carbon sugar) for incorporation into bacterial lipopolysaccharide in Gram-negative bacteria. This Paraburkholderia phytofirmans (strain DSM 17436 / LMG 22146 / PsJN) (Burkholderia phytofirmans) protein is 3-deoxy-manno-octulosonate cytidylyltransferase 1.